Reading from the N-terminus, the 187-residue chain is Protein P18, mitochondrial (187 aa).

A mitochondrion-targeting transit peptide spans 1–17 (MRRLSSQLMCTAAAVRF). The interval 160 to 187 (NAAKAKADGKEHPSTLAQQQSLFDIKIQ) is disordered.

It localises to the mitochondrion inner membrane. In terms of biological role, putative RNA-binding protein. This chain is Protein P18, mitochondrial, found in Leishmania tarentolae (Sauroleishmania tarentolae).